Consider the following 178-residue polypeptide: Cytochrome b6-f complex iron-sulfur subunit 2 (178 aa).

Residues 17–36 traverse the membrane as a helical segment; that stretch reads LLNFFTGAIVATTASAAIYP. The region spanning 61–161 is the Rieske domain; that stretch reads GHPIPASQIL…VQVKDDYIWI (101 aa). Positions 107, 109, 125, and 128 each coordinate [2Fe-2S] cluster. Residues Cys112 and Cys127 are joined by a disulfide bond.

This sequence belongs to the Rieske iron-sulfur protein family. The 4 large subunits of the cytochrome b6-f complex are cytochrome b6, subunit IV (17 kDa polypeptide, PetD), cytochrome f and the Rieske protein, while the 4 small subunits are PetG, PetL, PetM and PetN. The complex functions as a dimer. Requires [2Fe-2S] cluster as cofactor.

It is found in the cellular thylakoid membrane. It catalyses the reaction 2 oxidized [plastocyanin] + a plastoquinol + 2 H(+)(in) = 2 reduced [plastocyanin] + a plastoquinone + 4 H(+)(out). Functionally, component of the cytochrome b6-f complex, which mediates electron transfer between photosystem II (PSII) and photosystem I (PSI), cyclic electron flow around PSI, and state transitions. The protein is Cytochrome b6-f complex iron-sulfur subunit 2 of Nostoc sp. (strain PCC 7120 / SAG 25.82 / UTEX 2576).